The chain runs to 87 residues: CRISPR-associated endoribonuclease Cas2 (87 aa).

D8 serves as a coordination point for Mg(2+).

The protein belongs to the CRISPR-associated endoribonuclease Cas2 protein family. In terms of assembly, homodimer, forms a heterotetramer with a Cas1 homodimer. Mg(2+) serves as cofactor.

Its function is as follows. CRISPR (clustered regularly interspaced short palindromic repeat), is an adaptive immune system that provides protection against mobile genetic elements (viruses, transposable elements and conjugative plasmids). CRISPR clusters contain sequences complementary to antecedent mobile elements and target invading nucleic acids. CRISPR clusters are transcribed and processed into CRISPR RNA (crRNA). Functions as a ssRNA-specific endoribonuclease. Involved in the integration of spacer DNA into the CRISPR cassette. The sequence is that of CRISPR-associated endoribonuclease Cas2 from Dictyoglomus turgidum (strain DSM 6724 / Z-1310).